Here is a 235-residue protein sequence, read N- to C-terminus: Chalcone--flavanone isomerase 1 (235 aa).

The substrate site is built by threonine 50 and serine 192.

It belongs to the chalcone isomerase family.

The enzyme catalyses a chalcone = a flavanone.. It participates in secondary metabolite biosynthesis; flavonoid biosynthesis. Catalyzes the intramolecular cyclization of bicyclic chalcones into tricyclic (S)-flavanones. Responsible for the isomerization of 4,2',4',6'-tetrahydroxychalcone (also termed chalcone) into naringenin. The protein is Chalcone--flavanone isomerase 1 (CHI1) of Chrysanthemum morifolium (Florist's daisy).